A 421-amino-acid chain; its full sequence is Phosphatidylinositol 5-phosphate 4-kinase type-2 gamma (421 aa).

Position 2 is an N-acetylalanine (Ala-2). Ser-26 carries the phosphoserine modification. The 378-residue stretch at 43-420 (AADPLVGVFL…RFLDFIANIF (378 aa)) folds into the PIPK domain. Residues 69–75 (VMLLPDD) form a required for interaction with PIP5K1A region. At Ser-349 the chain carries Phosphoserine.

Interacts with PIP5K1A; the interaction inhibits PIP5K1A kinase activity. Phosphorylated, phosphorylation is induced by EGF.

It is found in the endoplasmic reticulum. The protein resides in the cytoplasm. The enzyme catalyses a 1,2-diacyl-sn-glycero-3-phospho-(1D-myo-inositol-5-phosphate) + ATP = a 1,2-diacyl-sn-glycero-3-phospho-(1D-myo-inositol-4,5-bisphosphate) + ADP + H(+). It catalyses the reaction 1,2-dihexadecanoyl-sn-glycero-3-phospho-(1D-myo-inositol-5-phosphate) + ATP = 1,2-dihexadecanoyl-sn-glycero-3-phospho-(1D-myo-inositol-4,5-bisphosphate) + ADP + H(+). It carries out the reaction 1,2-dihexadecanoyl-sn-glycero-3-phospho-(1D-myo-inositol-5-phosphate) + GTP = 1,2-dihexadecanoyl-sn-glycero-3-phospho-(1D-myo-inositol-4,5-bisphosphate) + GDP + H(+). Its function is as follows. Phosphatidylinositol 5-phosphate 4-kinase with low enzymatic activity. May be a GTP sensor, has higher GTP-dependent kinase activity than ATP-dependent kinase activity. PIP4Ks negatively regulate insulin signaling through a catalytic-independent mechanism. They interact with PIP5Ks and suppress PIP5K-mediated PtdIns(4,5)P2 synthesis and insulin-dependent conversion to PtdIns(3,4,5)P3. This Mus musculus (Mouse) protein is Phosphatidylinositol 5-phosphate 4-kinase type-2 gamma.